Consider the following 326-residue polypeptide: Apoptosis facilitator Bcl-2-like protein 14 (326 aa).

A Phosphoserine modification is found at Ser-44. A disordered region spans residues 100 to 147 (AEKEEDSQSSPPEICAQAQRSGVPQARPRSPKWPRSRSSMDQRLEHKA). A compositionally biased stretch (basic and acidic residues) spans 137–147 (SSMDQRLEHKA). Positions 211–225 (IVELLKYSGEQLERE) match the BH3 motif. Residues 307–314 (WIQQHGGW) carry the BH2 motif.

The protein belongs to the Bcl-2 family. Phosphorylated by MELK, leading to inhibit its pro-apoptotic function.

The protein localises to the cytoplasm. Its function is as follows. Plays a role in apoptosis. In Bos taurus (Bovine), this protein is Apoptosis facilitator Bcl-2-like protein 14 (BCL2L14).